The primary structure comprises 517 residues: Arp2/3 complex-activating protein rickA (517 aa).

2 disordered regions span residues 313–441 (LENN…SKPA) and 461–517 (KVSD…SFVR). 2 stretches are compositionally biased toward pro residues: residues 319–340 (PPSP…PSPL) and 347–378 (SSPP…PPMA). In terms of domain architecture, WH2 spans 406 to 423 (DTSDLMREIAGPKKLKKV). Residues 444–477 (VNALSGLESIFARRAVIKVSDSSSSESDSGNWSD) are central and acidic domains. Low complexity predominate over residues 463–479 (SDSSSSESDSGNWSDVS). Over residues 500-517 (THAQKINNRNSQNPSFVR) the composition is skewed to polar residues.

In terms of assembly, homodimer.

Its subcellular location is the cell surface. Functionally, recruits and activates the Arp2/3 complex, which in turn leads to actin polymerization, promoting Rickettsia motility during infection. This Rickettsia conorii (strain ATCC VR-613 / Malish 7) protein is Arp2/3 complex-activating protein rickA (rickA).